We begin with the raw amino-acid sequence, 375 residues long: Flagellar P-ring protein (375 aa).

A signal peptide spans 1–23 (MFNQSFLKYMLFGFFLFSFHAHA).

Belongs to the FlgI family. As to quaternary structure, the basal body constitutes a major portion of the flagellar organelle and consists of four rings (L,P,S, and M) mounted on a central rod.

The protein resides in the bacterial flagellum basal body. Assembles around the rod to form the L-ring and probably protects the motor/basal body from shearing forces during rotation. The sequence is that of Flagellar P-ring protein from Buchnera aphidicola subsp. Baizongia pistaciae (strain Bp).